We begin with the raw amino-acid sequence, 327 residues long: GMP reductase (327 aa).

Cys-176 (thioimidate intermediate) is an active-site residue. 205–228 (IIADGGIRTHGDIAKSIRFGASMV) contacts NADP(+).

This sequence belongs to the IMPDH/GMPR family. GuaC type 2 subfamily.

It carries out the reaction IMP + NH4(+) + NADP(+) = GMP + NADPH + 2 H(+). Its function is as follows. Catalyzes the irreversible NADPH-dependent deamination of GMP to IMP. It functions in the conversion of nucleobase, nucleoside and nucleotide derivatives of G to A nucleotides, and in maintaining the intracellular balance of A and G nucleotides. This is GMP reductase from Streptococcus pyogenes serotype M49 (strain NZ131).